Reading from the N-terminus, the 337-residue chain is MSLERCQSEWTEIEQEYQQLQETHKVYRQKLEELTNLQAICSSAISKQRKGLKDLKQSLYKCKKSCNGKDSEVINDLQVQIKERQNVFFDMEAYLPKRNGLYLNLVLGNVNVTLLSNQAKFAYKDEYEKFKLYMTIILMFGAVTCLFLLNYRVTDEIFNFLLVWYYCTLTIRESILRSNGSRIKGWWVSHHYVSTFLSGVMLTWPEGPMYQMFRSQFLAFSIYQSCVQFLQYYYQSGCLYRLRALGERNQLDLTVEGFQSWMWRGLTFLLPFLFFGHFWQLYNAVTLFRLSALDDCKEWQVFMLALTFLVLFLGNFLTTLKVVHQKLLKNKDKVKNN.

The stretch at 1-39 (MSLERCQSEWTEIEQEYQQLQETHKVYRQKLEELTNLQA) forms a coiled coil. The next 6 helical transmembrane spans lie at 100-122 (GLYLNLVLGNVNVTLLSNQAKFA), 130-150 (FKLYMTIILMFGAVTCLFLLN), 157-175 (IFNFLLVWYYCTLTIRESI), 185-205 (GWWVSHHYVSTFLSGVMLTWP), 268-288 (FLLPFLFFGHFWQLYNAVTLF), and 300-320 (QVFMLALTFLVLFLGNFLTTL).

This sequence belongs to the TMEM120 family.

Its subcellular location is the nucleus inner membrane. Necessary for efficient adipogenesis. Does not show ion channel activity. The protein is Transmembrane protein 120B (tmem120b) of Danio rerio (Zebrafish).